A 2593-amino-acid chain; its full sequence is Citrinin polyketide synthase (2593 aa).

Residues 70-224 (KLLENLNAWI…YVSVIVDQRR (155 aa)) are N-terminal acylcarrier protein transacylase domain (SAT). C139 serves as the catalytic Nucleophile; for transacylase activity. H258 (proton donor/acceptor; for transacylase activity) is an active-site residue. Positions 391-806 (DERIAVIGMA…GSNASMVVTQ (416 aa)) constitute a Ketosynthase family 3 (KS3) domain. Catalysis depends on for beta-ketoacyl synthase activity residues C555, H690, and H729. Residues 906-1191 (PDPKPVILCF…VAIWLEAGSN (286 aa)) are malonyl-CoA:ACP transacylase (MAT) domain. Residues 1291-1424 (PKGLTTFVGY…GTITFQAADS (134 aa)) are N-terminal hotdog fold. Positions 1291–1603 (PKGLTTFVGY…YQKVSISGIR (313 aa)) constitute a PKS/mFAS DH domain. The segment at 1322–1601 (LLSGHIMANA…ISYQKVSISG (280 aa)) is product template (PT) domain. Catalysis depends on H1326, which acts as the Proton acceptor; for dehydratase activity. Residues 1451–1603 (VADDILQGRN…YQKVSISGIR (153 aa)) form a C-terminal hotdog fold region. D1508 functions as the Proton donor; for dehydratase activity in the catalytic mechanism. Residues 1636–1662 (VADSPLVDGSSTAVSGTPPTKKAPKAP) form a disordered region. Residues 1661-1738 (APSVDITGKM…SLVECMQRIL (78 aa)) form the Carrier domain. S1689 is subject to O-(pantetheine 4'-phosphoryl)serine. Active-site for methyltransferase activity residues include Y1955, H2067, and E2093. A methyltransferase (CMeT) domain region spans residues 1960 to 2134 (INAVWIQQAE…ATHWKKILTS (175 aa)). Positions 2215–2459 (PAPTGHCVLV…KALPDFDGSL (245 aa)) are NADPH-binding (R) domain.

It depends on pantetheine 4'-phosphate as a cofactor.

The protein operates within mycotoxin biosynthesis. In terms of biological role, non-reducing polyketide synthase; part of the gene cluster that mediates the biosynthesis of the mycotoxin citrinin, a hepato-nephrotoxic compound to humans due to inhibition of respiration complex III. The pathway begins with the synthesis of a keto-aldehyde intermediate by the citrinin PKS (pksCT) from successive condensations of 4 malonyl-CoA units, presumably with a simple acetyl-CoA starter unit. Release of the keto-aldehyde intermediate is consistent with the presence of the C-terminal reductive release domain. Mp11 collaborates with pksCT by catalyzing the hydrolysis of ACP-bound acyl intermediates to free the ACP from stalled intermediates. Mpl2 then catalyzes the oxidation of the C-12 methyl of the ketone intermediate to an alcohol intermediate which is further oxidized by the oxidoreductase mpl7 to produce a bisaldehyde intermediate. The fourth catalytic step is catalyzed by the mpl4 aldehyde dehydrogenase. The final transformation is the reduction of C-3 by mpl6 to provide the chemically stable citrinin nucleus. In Monascus purpureus (Red mold), this protein is Citrinin polyketide synthase.